A 682-amino-acid chain; its full sequence is DNA ligase (682 aa).

NAD(+)-binding positions include 42–46 (DAEYD), 91–92 (SL), and glutamate 124. Lysine 126 functions as the N6-AMP-lysine intermediate in the catalytic mechanism. 4 residues coordinate NAD(+): arginine 147, glutamate 184, lysine 302, and lysine 326. Positions 420, 423, 438, and 444 each coordinate Zn(2+). The BRCT domain maps to 603 to 682 (IADNPLKGKS…QEFIALTGEN (80 aa)).

The protein belongs to the NAD-dependent DNA ligase family. LigA subfamily. Requires Mg(2+) as cofactor. Mn(2+) is required as a cofactor.

It catalyses the reaction NAD(+) + (deoxyribonucleotide)n-3'-hydroxyl + 5'-phospho-(deoxyribonucleotide)m = (deoxyribonucleotide)n+m + AMP + beta-nicotinamide D-nucleotide.. Functionally, DNA ligase that catalyzes the formation of phosphodiester linkages between 5'-phosphoryl and 3'-hydroxyl groups in double-stranded DNA using NAD as a coenzyme and as the energy source for the reaction. It is essential for DNA replication and repair of damaged DNA. This Actinobacillus pleuropneumoniae serotype 3 (strain JL03) protein is DNA ligase.